The sequence spans 565 residues: Probable protease Gilli_2517 (565 aa).

Its function is as follows. Probably a dedicated protease for substrate gasdermin bGSDM; cleaves the bGSDM precursor, releasing the pore-forming moiety, which integrates into the membrane and triggers cell death. Involved in defense against bacteriophages. Expression of bGSDM and this neighboring protease is not toxic in E.coli. This Gillisia limnaea (strain DSM 15749 / LMG 21470 / R-8282) protein is Probable protease Gilli_2517.